An 83-amino-acid chain; its full sequence is uncharacterized protein (83 aa).

The next 2 membrane-spanning stretches (helical) occupy residues 23-43 (GGCY…SAIA) and 49-69 (SLWW…VVYG).

It is found in the cell membrane. This is an uncharacterized protein from Mycobacterium tuberculosis (strain CDC 1551 / Oshkosh).